Reading from the N-terminus, the 173-residue chain is Large ribosomal subunit protein uL10 (173 aa).

The protein belongs to the universal ribosomal protein uL10 family. In terms of assembly, part of the ribosomal stalk of the 50S ribosomal subunit. The N-terminus interacts with L11 and the large rRNA to form the base of the stalk. The C-terminus forms an elongated spine to which L12 dimers bind in a sequential fashion forming a multimeric L10(L12)X complex.

Forms part of the ribosomal stalk, playing a central role in the interaction of the ribosome with GTP-bound translation factors. The chain is Large ribosomal subunit protein uL10 (rplJ) from Synechocystis sp. (strain ATCC 27184 / PCC 6803 / Kazusa).